An 848-amino-acid chain; its full sequence is MITPYFLENFWGNKNSGFYVLYHNMKHGQISSKELSDFIRERATIEEAYSRSMTKLAKTASNFSQLGTFAPVWDVFKQSTEKLAACHMELVRKLQELIKEVQKYVDEQAKNHKKTKEEVASTLEAVHNIQSVSQALLKSKENYINKTLEQERMRKEGAKQGDLDKAGLKVKKATESYKSYVEKYATAKTEFEQRMTETAQKFQGIEEEHILRMQEIIHSYSLSVEETHIQIGEVQQEFVNNMENTSVESLIEKLAESRGTGKERPGPIEFEECNVSIATEGAKPRKRKTFAIPGRRKEKDTDSTESTEVEAVNASNGAPPGFYGAIDLHNANVPQLDDEGFCIRPEVNENDAKENSFYSSSDSEDEDEPRKFHVQIKPVQTNNGTHQHKVTIDELKASIGNISLSPTPAVHMKRNQSNDELARPKIPQPPLNDRFSSNDLLSLDPFGPTSTGSSSSLPQSSVPPPNRPTTPLGTSSIVPPPRPLSRPKLATGKLTGITESGRPFSPPKLLNSSPPPPAAPLARAESFSSLSSNTSLSASNTPTVEDDVFVGKLPTFEKRCETPAGTSRGPSPVTLASQDALPIAVAFTESVNAYFKGADPSKCIVKITGDMTLSFPSGIIKIFTSSPSPAVLSFKLLNASRLEQIMPNQQLLHSDSSQSDTNTKDFWMNMPALTSFLRKSSEQNPAASYYNVDILKYQVCSNGIQSTPLNLVVYWKCSRSTTDLRVDYRYNPEAMQPPAPLTNVQVLVPVNGGVMNMQSLPNAIWNAEQNKSLWKLSDISDKSENEGSGSLRAKFELSEGPSIPATLAVQFFSEGSSLSGVDMELAGSGYRLSLNKKRFATGRYMADC.

An F-BAR domain is found at 4-250; the sequence is PYFLENFWGN…NMENTSVESL (247 aa). The stretch at 87 to 114 forms a coiled coil; the sequence is HMELVRKLQELIKEVQKYVDEQAKNHKK. Disordered regions lie at residues 292–316 and 404–526; these read IPGR…NASN and LSPT…RAES. Residues Ser-405 and Ser-417 each carry the phosphoserine modification. Low complexity predominate over residues 445–460; sequence PFGPTSTGSSSSLPQS. The MHD domain maps to 580-848; that stretch reads ALPIAVAFTE…FATGRYMADC (269 aa).

Belongs to the FCHO family. As to quaternary structure, homodimer.

The protein resides in the membrane. Its subcellular location is the clathrin-coated pit. Its function is as follows. May function in an early step of clathrin-mediated endocytosis. The chain is F-BAR domain only protein 2 (fcho2) from Danio rerio (Zebrafish).